A 350-amino-acid chain; its full sequence is Hydroxymethylglutaryl-CoA synthase (350 aa).

Residue Asp30 coordinates (3S)-3-hydroxy-3-methylglutaryl-CoA. Catalysis depends on Glu82, which acts as the Proton donor/acceptor. Residues Cys114, Ser155, Thr203, and His236 each coordinate (3S)-3-hydroxy-3-methylglutaryl-CoA. The active-site Acyl-thioester intermediate is Cys114. His236 functions as the Proton donor/acceptor in the catalytic mechanism. Arg241 contacts CoA. (3S)-3-hydroxy-3-methylglutaryl-CoA contacts are provided by Arg245, Asn268, and Ser298.

It belongs to the thiolase-like superfamily. Archaeal HMG-CoA synthase family. As to quaternary structure, interacts with acetoacetyl-CoA thiolase that catalyzes the precedent step in the pathway and with a DUF35 protein. The acetoacetyl-CoA thiolase/HMG-CoA synthase complex channels the intermediate via a fused CoA-binding site, which allows for efficient coupling of the endergonic thiolase reaction with the exergonic HMGCS reaction.

The catalysed reaction is acetoacetyl-CoA + acetyl-CoA + H2O = (3S)-3-hydroxy-3-methylglutaryl-CoA + CoA + H(+). The protein operates within metabolic intermediate biosynthesis; (R)-mevalonate biosynthesis; (R)-mevalonate from acetyl-CoA: step 2/3. Catalyzes the condensation of acetyl-CoA with acetoacetyl-CoA to form 3-hydroxy-3-methylglutaryl-CoA (HMG-CoA). Functions in the mevalonate (MVA) pathway leading to isopentenyl diphosphate (IPP), a key precursor for the biosynthesis of isoprenoid compounds that are building blocks of archaeal membrane lipids. The chain is Hydroxymethylglutaryl-CoA synthase from Pyrobaculum aerophilum (strain ATCC 51768 / DSM 7523 / JCM 9630 / CIP 104966 / NBRC 100827 / IM2).